The sequence spans 472 residues: Poly(A) polymerase catalytic subunit (472 aa).

Residues D194 and D196 contribute to the active site.

This sequence belongs to the poxviridae poly(A) polymerase catalytic subunit family. In terms of assembly, heterodimer of a large (catalytic) subunit and a small (regulatory) subunit.

It catalyses the reaction RNA(n) + ATP = RNA(n)-3'-adenine ribonucleotide + diphosphate. Polymerase that creates the 3'-poly(A) tail of mRNA's. The sequence is that of Poly(A) polymerase catalytic subunit (PAPL) from Serinus (CNPV).